The following is a 30-amino-acid chain: Cycloviolacin-O20 (30 aa).

The segment at residues glycine 1–aspartate 30 is a cross-link (cyclopeptide (Gly-Asp)). Disulfide bonds link cysteine 4–cysteine 20, cysteine 8–cysteine 22, and cysteine 13–cysteine 27.

This is a cyclic peptide.

In terms of biological role, probably participates in a plant defense mechanism. In Viola odorata (Sweet violet), this protein is Cycloviolacin-O20.